We begin with the raw amino-acid sequence, 397 residues long: Glycine betaine/carnitine transport ATP-binding protein GbuA (397 aa).

The 237-residue stretch at 28 to 264 (KSKTDILKET…PANEYVEKFI (237 aa)) folds into the ABC transporter domain. ATP is bound at residue 60–67 (GLSGSGKS). CBS domains follow at residues 279–335 (MIRP…NITS) and 340–395 (LHRD…EVNV).

It belongs to the ABC transporter superfamily. The complex is composed of two ATP-binding proteins (GbuA), two transmembrane proteins (GbuB) and a solute-binding protein (GbuC).

The catalysed reaction is a quaternary ammonium(out) + ATP + H2O = a quaternary ammonium(in) + ADP + phosphate + H(+). With respect to regulation, the complex is activated by an osmotic gradient or by low temperature. Part of the ABC transporter complex GbuABC involved in glycine betaine uptake. Responsible for energy coupling to the transport system. Involved, with BetL and OpuC, in osmoprotection and cryoprotection of Listeria. Can also uptake carnitine when carnitine is abundant in the growth medium. This Listeria monocytogenes serotype 1/2a (strain 10403S) protein is Glycine betaine/carnitine transport ATP-binding protein GbuA (gbuA).